Reading from the N-terminus, the 310-residue chain is Glucan endo-1,3-beta-glucosidase GI (310 aa).

The active-site Proton donor is the glutamate 96. The active-site Nucleophile is glutamate 234.

Belongs to the glycosyl hydrolase 17 family. Monomer. In terms of tissue distribution, young leaves and roots.

The catalysed reaction is Hydrolysis of (1-&gt;3)-beta-D-glucosidic linkages in (1-&gt;3)-beta-D-glucans.. May provide a degree of protection against microbial invasion of germinated barley grain through its ability to degrade fungal cell wall polysaccharides. Does not hydrolyze (1,3;1,4)-beta-D-glucans, (1,6)-beta-D-glucan, CM-cellulose, insoluble (1,3)-beta-D-glucans or aryl beta-D-glycosides. This Hordeum vulgare (Barley) protein is Glucan endo-1,3-beta-glucosidase GI.